The sequence spans 765 residues: Phosphoribosylformylglycinamidine synthase subunit PurL (765 aa).

His59 is a catalytic residue. 2 residues coordinate ATP: Tyr62 and Lys104. Glu106 lines the Mg(2+) pocket. Substrate is bound by residues Ser107–His110 and Arg129. The active-site Proton acceptor is the His108. Asp130 provides a ligand contact to Mg(2+). Gln254 lines the substrate pocket. Residue Asp282 participates in Mg(2+) binding. Glu326–Gln328 is a substrate binding site. Residues Asn522 and Gly559 each coordinate ATP. Asn560 contributes to the Mg(2+) binding site. Residue Ser562 coordinates substrate.

Belongs to the FGAMS family. Monomer. Part of the FGAM synthase complex composed of 1 PurL, 1 PurQ and 2 PurS subunits.

The protein resides in the cytoplasm. The enzyme catalyses N(2)-formyl-N(1)-(5-phospho-beta-D-ribosyl)glycinamide + L-glutamine + ATP + H2O = 2-formamido-N(1)-(5-O-phospho-beta-D-ribosyl)acetamidine + L-glutamate + ADP + phosphate + H(+). Its pathway is purine metabolism; IMP biosynthesis via de novo pathway; 5-amino-1-(5-phospho-D-ribosyl)imidazole from N(2)-formyl-N(1)-(5-phospho-D-ribosyl)glycinamide: step 1/2. In terms of biological role, part of the phosphoribosylformylglycinamidine synthase complex involved in the purines biosynthetic pathway. Catalyzes the ATP-dependent conversion of formylglycinamide ribonucleotide (FGAR) and glutamine to yield formylglycinamidine ribonucleotide (FGAM) and glutamate. The FGAM synthase complex is composed of three subunits. PurQ produces an ammonia molecule by converting glutamine to glutamate. PurL transfers the ammonia molecule to FGAR to form FGAM in an ATP-dependent manner. PurS interacts with PurQ and PurL and is thought to assist in the transfer of the ammonia molecule from PurQ to PurL. This chain is Phosphoribosylformylglycinamidine synthase subunit PurL, found in Thermobifida fusca (strain YX).